The primary structure comprises 287 residues: O-ureido-serine racemase (287 aa).

Asn-20 provides a ligand contact to substrate. Residue Cys-81 is the Proton donor of the active site. Substrate contacts are provided by residues Gly-82 to Asn-83, Asn-167, Asn-200, and Glu-218 to Tyr-219. Cys-227 functions as the Proton acceptor in the catalytic mechanism. Substrate is bound at residue Gly-228–Ser-229.

This sequence belongs to the diaminopimelate epimerase family. Monomer.

Its subcellular location is the cytoplasm. It catalyses the reaction O-ureido-L-serine = O-ureido-D-serine. Its activity is regulated as follows. Inhibited by thiol-inactivating reagents such as iodoacetamide and Hg(2+) ions. In terms of biological role, involved in the biosynthesis of the antibiotic D-cycloserine (DCS), a cyclic structural analog of D-alanine, used as an antitubercular agent. Catalyzes the stereoinversion of O-ureido-L-serine to O-ureido-D-serine. In Streptomyces lavendulae, this protein is O-ureido-serine racemase.